The chain runs to 397 residues: Protein irld-34 (397 aa).

This is Protein irld-34 from Caenorhabditis elegans.